Reading from the N-terminus, the 465-residue chain is Methionine aminopeptidase 2-2 (465 aa).

Positions 1–11 (MGSKTPHNHRR) are enriched in basic residues. Residues 1-89 (MGSKTPHNHR…KKKKNTKELE (89 aa)) form a disordered region. Residues 43–54 (GESEGGEDEDDD) are compositionally biased toward acidic residues. Residues 73–84 (RNKRKKKKKKKN) are compositionally biased toward basic residues. Residue histidine 217 participates in substrate binding. Residues aspartate 238, aspartate 249, and histidine 318 each contribute to the a divalent metal cation site. Histidine 326 contacts substrate. 2 residues coordinate a divalent metal cation: glutamate 351 and glutamate 446.

This sequence belongs to the peptidase M24A family. Methionine aminopeptidase eukaryotic type 2 subfamily. Requires Co(2+) as cofactor. It depends on Zn(2+) as a cofactor. The cofactor is Mn(2+). Fe(2+) serves as cofactor.

It localises to the cytoplasm. It carries out the reaction Release of N-terminal amino acids, preferentially methionine, from peptides and arylamides.. Its function is as follows. Cotranslationally removes the N-terminal methionine from nascent proteins. The N-terminal methionine is often cleaved when the second residue in the primary sequence is small and uncharged (Met-Ala-, Cys, Gly, Pro, Ser, Thr, or Val). This is Methionine aminopeptidase 2-2 from Ajellomyces capsulatus (strain G186AR / H82 / ATCC MYA-2454 / RMSCC 2432) (Darling's disease fungus).